The sequence spans 239 residues: Leucyl/phenylalanyl-tRNA--protein transferase (239 aa).

Belongs to the L/F-transferase family.

It is found in the cytoplasm. It catalyses the reaction N-terminal L-lysyl-[protein] + L-leucyl-tRNA(Leu) = N-terminal L-leucyl-L-lysyl-[protein] + tRNA(Leu) + H(+). It carries out the reaction N-terminal L-arginyl-[protein] + L-leucyl-tRNA(Leu) = N-terminal L-leucyl-L-arginyl-[protein] + tRNA(Leu) + H(+). The catalysed reaction is L-phenylalanyl-tRNA(Phe) + an N-terminal L-alpha-aminoacyl-[protein] = an N-terminal L-phenylalanyl-L-alpha-aminoacyl-[protein] + tRNA(Phe). Functionally, functions in the N-end rule pathway of protein degradation where it conjugates Leu, Phe and, less efficiently, Met from aminoacyl-tRNAs to the N-termini of proteins containing an N-terminal arginine or lysine. In Aliivibrio fischeri (strain ATCC 700601 / ES114) (Vibrio fischeri), this protein is Leucyl/phenylalanyl-tRNA--protein transferase.